We begin with the raw amino-acid sequence, 525 residues long: Allantoate deiminase (525 aa).

A signal peptide spans 1–53; it reads MAVPHPSSSSSRSHPFLSHVYHTSFHHHHHHNHPSLVLFWCLVFSLLSPLALS. Over residues 56–75 the composition is skewed to low complexity; that stretch reads SSSSSSSSDSSSSSSSHISL. The tract at residues 56–78 is disordered; it reads SSSSSSSSDSSSSSSSHISLGIG. The N-linked (GlcNAc...) asparagine glycan is linked to N156. H167, D178, E215, H281, and H499 together coordinate Mn(2+).

This sequence belongs to the peptidase M20A family. In terms of assembly, homodimer. It depends on Mn(2+) as a cofactor. As to expression, expressed in seedlings, roots, stems, leaves, flowers, siliques and seeds.

Its subcellular location is the endoplasmic reticulum. The enzyme catalyses allantoate + H2O + 2 H(+) = (S)-2-ureidoglycine + NH4(+) + CO2. Inhibited by borate, fluoride, L-Asn and L-Asp, but not by phenylphosphorodiamidate. Functionally, involved in the catabolism of purine nucleotides. Can use allantoate as substrate, but not Nalpha-carbamoyl-L-Asp, Nalpha-carbamoyl-L-Ala or Nalpha-carbamoyl-Gly. The sequential activity of AAH, UGLYAH and UAH allows a complete purine breakdown without the intermediate generation of urea. Involved in the regulation of seed maturation and seed dormancy. In Arabidopsis thaliana (Mouse-ear cress), this protein is Allantoate deiminase.